The following is a 432-amino-acid chain: Adenylosuccinate synthetase (432 aa).

Residues 13–19 and 41–43 each bind GTP; these read GDEGKGK and GHT. Catalysis depends on aspartate 14, which acts as the Proton acceptor. Mg(2+) is bound by residues aspartate 14 and glycine 41. IMP-binding positions include 14 to 17, 39 to 42, threonine 130, arginine 144, glutamine 225, threonine 240, and arginine 304; these read DEGK and NAGH. Histidine 42 acts as the Proton donor in catalysis. Residue 300 to 306 participates in substrate binding; the sequence is ATTGRPR. GTP-binding positions include arginine 306, 332-334, and 415-417; these read KLD and STG.

Belongs to the adenylosuccinate synthetase family. As to quaternary structure, homodimer. Mg(2+) is required as a cofactor.

The protein localises to the cytoplasm. The enzyme catalyses IMP + L-aspartate + GTP = N(6)-(1,2-dicarboxyethyl)-AMP + GDP + phosphate + 2 H(+). It participates in purine metabolism; AMP biosynthesis via de novo pathway; AMP from IMP: step 1/2. In terms of biological role, plays an important role in the de novo pathway of purine nucleotide biosynthesis. Catalyzes the first committed step in the biosynthesis of AMP from IMP. In Hahella chejuensis (strain KCTC 2396), this protein is Adenylosuccinate synthetase.